A 1757-amino-acid chain; its full sequence is Serine/threonine-protein kinase WNK3 (1757 aa).

Residues 1–25 (MATDSGEPASTEDSEKPDGVSFENR) are disordered. Position 62 is a phosphoserine (S62). Positions 66-82 (TEDDKVAESSRRDERKA) are enriched in basic and acidic residues. The segment at 66-85 (TEDDKVAESSRRDERKAATN) is disordered. The 259-residue stretch at 146–404 (LKFDIELGRG…IKDLLNHAFF (259 aa)) folds into the Protein kinase domain. Residues 226 to 229 (TELM) and K276 each bind ATP. D293 functions as the Proton acceptor in the catalytic mechanism. A phosphoserine; by autocatalysis mark is found at S303 and S307. The segment at 536–546 (EYEETEVDQHV) is interaction with KLHL3. T540 carries the phosphothreonine modification. Composition is skewed to polar residues over residues 551 to 570 (LQGK…SSEP), 578 to 604 (SDTS…KLTQ), and 674 to 689 (SVKE…SGNG). 2 disordered regions span residues 551–604 (LQGK…KLTQ) and 674–705 (SVKE…PRPE). S1039 bears the Phosphoserine mark. The segment covering 1404-1422 (VATEKNVTSTTEVSVQSGS) has biased composition (polar residues). Disordered regions lie at residues 1404–1440 (VATE…QTCT), 1479–1498 (SLFY…EIED), and 1536–1574 (ATKD…MTHS). Positions 1479–1491 (SLFYSPSSPMSSD) are enriched in low complexity. S1550 and S1553 each carry phosphoserine. The segment covering 1555-1566 (RRPRSFKSKLRS) has biased composition (basic residues). The residue at position 1595 (S1595) is a Phosphoserine. Disordered stretches follow at residues 1621-1650 (HFPS…CEST) and 1734-1757 (PGMN…PGPK). The segment covering 1624–1637 (SKPSLNQLKQSQQK) has biased composition (low complexity). A compositionally biased stretch (polar residues) spans 1641 to 1650 (ENWNKSCEST). Residues 1742–1757 (PAPPVQNPASIPPGPK) show a composition bias toward pro residues.

This sequence belongs to the protein kinase superfamily. Ser/Thr protein kinase family. WNK subfamily. As to quaternary structure, interacts with WNK1 and WNK4. It depends on Mg(2+) as a cofactor. Post-translationally, autophosphorylated at Ser-303 and Ser-307, promoting its activity. Phosphorylation at Thr-540 prevents interaction with KLHL3 and subsequent ubiquitination and degradation by the BCR(KLHL3) complex. In terms of processing, ubiquitinated by the BCR(KLHL2) complex, leading to its degradation. Ubiquitinated by the BCR(KLHL3) complex, leading to its degradation. As to expression, expressed in pancreatic duct.

The protein localises to the cytoplasm. It catalyses the reaction L-seryl-[protein] + ATP = O-phospho-L-seryl-[protein] + ADP + H(+). The catalysed reaction is L-threonyl-[protein] + ATP = O-phospho-L-threonyl-[protein] + ADP + H(+). With respect to regulation, activated in response to hyperosmotic stress: cell shrinkage promotes formation of a membraneless compartment that concentrates WNK3 with its substrates, OXSR1/OSR1 and STK39/SPAK. Activation requires autophosphorylation of Ser-307 and, to a lower extent, Ser-303. Autophosphorylation and subsequent activation is inhibited by increases in intracellular ionic strength: Cl(-) potently inhibits WNK3 kinase activity via direct binding. Also inhibited by K(+) ions. Kinase activity is inhibited by WNK4. Functionally, serine/threonine-protein kinase component of the WNK3-SPAK/OSR1 kinase cascade, which plays an important role in the regulation of electrolyte homeostasis and regulatory volume increase in response to hyperosmotic stress. WNK3 mediates regulatory volume increase in response to hyperosmotic stress by acting as a molecular crowding sensor, which senses cell shrinkage and mediates formation of a membraneless compartment by undergoing liquid-liquid phase separation. The membraneless compartment concentrates WNK3 with its substrates, OXSR1/OSR1 and STK39/SPAK, promoting WNK3-dependent phosphorylation and activation of downstream kinases OXSR1/OSR1 and STK39/SPAK. Following activation, OXSR1/OSR1 and STK39/SPAK catalyze phosphorylation of ion cotransporters SLC12A1/NKCC2, SLC12A2/NKCC1, SLC12A3/NCC, SLC12A4/KCC1, SLC12A5/KCC2 or SLC12A6/KCC3, regulating their activity. Phosphorylation of Na-K-Cl cotransporters SLC12A2/NKCC1 and SLC12A2/NKCC1 promote their activation and ion influx; simultaneously, phosphorylation of K-Cl cotransporters SLC12A4/KCC1, SLC12A5/KCC2 and SLC12A6/KCC3 inhibits its activity, blocking ion efflux. Phosphorylates WNK4, possibly regulating the activity of SLC12A3/NCC. May also phosphorylate NEDD4L. Also acts as a scaffold protein independently of its protein kinase activity: negatively regulates cell membrane localization of various transporters and channels, such as KCNJ1 and SLC26A9. Increases Ca(2+) influx mediated by TRPV5 and TRPV6 by enhancing their membrane expression level via a kinase-dependent pathway. This chain is Serine/threonine-protein kinase WNK3, found in Mus musculus (Mouse).